Here is a 310-residue protein sequence, read N- to C-terminus: Translocator protein BipD (310 aa).

2 coiled-coil regions span residues 127–171 (DPIL…LQDY) and 250–299 (DTAR…AIST).

It belongs to the invasin protein D family.

It localises to the secreted. Required for invasion of epithelial cells, as well as for survival within host cells, escape from endocytic vesicles and subsequent actin-tail formation. Probably regulates the secretion of effectors BipB and BipC and their final integration into the target cell membrane. The chain is Translocator protein BipD (bipD) from Burkholderia mallei (strain NCTC 10247).